Consider the following 1028-residue polypeptide: Beta-galactosidase (1028 aa).

Residues Asn104 and Asp203 each coordinate substrate. Residue Asp203 coordinates Na(+). Positions 418, 420, and 463 each coordinate Mg(2+). Substrate is bound by residues Glu463 and 539 to 542 (EYAH). Glu463 acts as the Proton donor in catalysis. The active-site Nucleophile is the Glu539. Residue Asn599 participates in Mg(2+) binding. Na(+) contacts are provided by Phe603 and Asn606. Substrate-binding residues include Asn606 and Trp1004.

It belongs to the glycosyl hydrolase 2 family. Homodimer. Mg(2+) serves as cofactor. Mn(2+) is required as a cofactor. Requires Fe cation as cofactor. It depends on Na(+) as a cofactor. The cofactor is K(+).

It carries out the reaction Hydrolysis of terminal non-reducing beta-D-galactose residues in beta-D-galactosides.. Completely inhibited by Hg(2+), Cu(2+) Ag(2+), and partially inhibited by Zn(2+), imidazole and EDTA. Activated by Ca(2+), Co(2+), Ni(2+). Functionally, this beta-galactosidase is also able to catalyze glycosyl transfer to a series of acceptors, including hexose, pentose, beta- or alpha-disaccharides, hexahydroxy alcohol, cyclitol, and aromatic glycosides, resulting in the production of galacto-oligosaccharides (GOS). In Enterobacter agglomerans (Erwinia herbicola), this protein is Beta-galactosidase (lacZ).